A 342-amino-acid chain; its full sequence is Renalase (342 aa).

The first 17 residues, 1 to 17 (MAQVLIVGAGMTGSLCA), serve as a signal peptide directing secretion. FAD-binding positions include Thr12, Arg42, and 61–62 (QY).

It belongs to the renalase family. The cofactor is FAD. As to expression, secreted into the blood by the kidney. Highly expressed in the kidney, expressed at lower level in heart, skeletal muscle and small intestine. Its plasma concentration is markedly reduced in patients with end-stage renal disease, as compared with healthy subjects.

It is found in the secreted. It carries out the reaction 1,2-dihydro-beta-NAD + O2 + H(+) = H2O2 + NAD(+). It catalyses the reaction 1,2-dihydro-beta-NADP + O2 + H(+) = H2O2 + NADP(+). The enzyme catalyses 1,6-dihydro-beta-NADP + O2 + H(+) = H2O2 + NADP(+). The catalysed reaction is 1,6-dihydro-beta-NAD + O2 + H(+) = H2O2 + NAD(+). Its function is as follows. Catalyzes the oxidation of the less abundant 1,2-dihydro-beta-NAD(P) and 1,6-dihydro-beta-NAD(P) to form beta-NAD(P)(+). The enzyme hormone is secreted by the kidney, and circulates in blood and modulates cardiac function and systemic blood pressure. Lowers blood pressure in vivo by decreasing cardiac contractility and heart rate and preventing a compensatory increase in peripheral vascular tone, suggesting a causal link to the increased plasma catecholamine and heightened cardiovascular risk. High concentrations of catecholamines activate plasma renalase and promotes its secretion and synthesis. This chain is Renalase (RNLS), found in Homo sapiens (Human).